The chain runs to 139 residues: Ribonuclease homolog (139 aa).

A signal peptide spans 1–23 (MAMSSLWWTAILLLALTVSMCYG). The active-site Proton acceptor is His-34. Intrachain disulfides connect Cys-49–Cys-102, Cys-64–Cys-111, and Cys-82–Cys-126. Position 65–69 (65–69 (KSFNT)) interacts with substrate. The Proton donor role is filled by His-133.

It belongs to the pancreatic ribonuclease family.

Its subcellular location is the secreted. This chain is Ribonuclease homolog, found in Gallus gallus (Chicken).